A 188-amino-acid chain; its full sequence is Tumor necrosis factor alpha-induced protein 8-like protein (188 aa).

It belongs to the TNFAIP8 family.

The chain is Tumor necrosis factor alpha-induced protein 8-like protein from Drosophila pseudoobscura pseudoobscura (Fruit fly).